Here is a 155-residue protein sequence, read N- to C-terminus: Ribosome maturation factor RimP (155 aa).

Belongs to the RimP family.

It localises to the cytoplasm. Its function is as follows. Required for maturation of 30S ribosomal subunits. The protein is Ribosome maturation factor RimP of Hamiltonella defensa subsp. Acyrthosiphon pisum (strain 5AT).